Reading from the N-terminus, the 251-residue chain is Putative F-box protein L166 (251 aa).

The 46-residue stretch at 1–46 folds into the F-box domain; it reads MDNICELFDEILPLIIEYLSDHDKVKFMTTCSRLYYFIDKVYYENI. Residues 188–251 are disordered; that stretch reads PEPESQENFR…RPKSFMKYRR (64 aa). Residues 202–217 are compositionally biased toward polar residues; that stretch reads TESNNNKPVNKSQPQI. A compositionally biased stretch (basic residues) spans 241-251; that stretch reads KRPKSFMKYRR.

The chain is Putative F-box protein L166 from Acanthamoeba polyphaga (Amoeba).